The primary structure comprises 594 residues: Elongation factor 4 (594 aa).

The tr-type G domain occupies 2–184 (KNIRNFSIIA…TIVAKVPAPE (183 aa)). GTP is bound by residues 14-19 (DHGKST) and 131-134 (NKID).

Belongs to the TRAFAC class translation factor GTPase superfamily. Classic translation factor GTPase family. LepA subfamily.

The protein resides in the cell inner membrane. It carries out the reaction GTP + H2O = GDP + phosphate + H(+). In terms of biological role, required for accurate and efficient protein synthesis under certain stress conditions. May act as a fidelity factor of the translation reaction, by catalyzing a one-codon backward translocation of tRNAs on improperly translocated ribosomes. Back-translocation proceeds from a post-translocation (POST) complex to a pre-translocation (PRE) complex, thus giving elongation factor G a second chance to translocate the tRNAs correctly. Binds to ribosomes in a GTP-dependent manner. This Francisella tularensis subsp. tularensis (strain FSC 198) protein is Elongation factor 4.